Consider the following 154-residue polypeptide: Myoglobin (154 aa).

Residues 2–148 form the Globin domain; sequence GLSDGEWHLV…FRNDIAAKIK (147 aa). At Ser4 the chain carries Phosphoserine. His65 is a binding site for nitrite. His65 provides a ligand contact to O2. Phosphothreonine is present on Thr68. His94 contacts heme b.

It belongs to the globin family. As to quaternary structure, monomeric.

Its subcellular location is the cytoplasm. The protein resides in the sarcoplasm. The enzyme catalyses Fe(III)-heme b-[protein] + nitric oxide + H2O = Fe(II)-heme b-[protein] + nitrite + 2 H(+). The catalysed reaction is H2O2 + AH2 = A + 2 H2O. Monomeric heme protein which primary function is to store oxygen and facilitate its diffusion within muscle tissues. Reversibly binds oxygen through a pentacoordinated heme iron and enables its timely and efficient release as needed during periods of heightened demand. Depending on the oxidative conditions of tissues and cells, and in addition to its ability to bind oxygen, it also has a nitrite reductase activity whereby it regulates the production of bioactive nitric oxide. Under stress conditions, like hypoxia and anoxia, it also protects cells against reactive oxygen species thanks to its pseudoperoxidase activity. The protein is Myoglobin (MB) of Pusa sibirica (Baikal seal).